Reading from the N-terminus, the 725-residue chain is Protein ALEX (725 aa).

7 disordered regions span residues 1 to 93 (MSPS…ARAQ), 177 to 226 (GAIA…PLTD), 256 to 340 (EPPL…PSQP), 396 to 481 (PILT…SPLL), 508 to 528 (PMQVHWSGEPGHSQLLPPLGH), 584 to 624 (LPGL…AASS), and 638 to 675 (ATRSGATQSATSSPEPSEAASVYPSVPDHDPSAPGRPR). Basic residues predominate over residues 41 to 51 (HLRRKPCHSRH). The segment covering 260 to 276 (GSTTTPLSIWTAPQSQV) has biased composition (polar residues). Composition is skewed to basic and acidic residues over residues 297 to 307 (QLSEKQPRWKE) and 314 to 326 (RWKEKSPLRREGT). Composition is skewed to pro residues over residues 423–442 (PSQPPRQSLPPRPSLPPGQP) and 459–473 (RSLPPGQPLSPPRSP). Composition is skewed to low complexity over residues 584–598 (LPGLTSTSGAEAAAG) and 643–658 (ATQSATSSPEPSEAAS).

Belongs to the ALEX family. In terms of assembly, interacts with the N-terminal region of the XLas isoforms of guanine nucleotide-binding protein G(s) subunit alpha.

The protein resides in the cell membrane. It is found in the cell projection. Its subcellular location is the ruffle. May inhibit the adenylyl cyclase-stimulating activity of guanine nucleotide-binding protein G(s) subunit alpha which is produced from the same locus in a different open reading frame. This is Protein ALEX from Mus musculus (Mouse).